Here is a 364-residue protein sequence, read N- to C-terminus: Alanine racemase (364 aa).

The active-site Proton acceptor; specific for D-alanine is Lys-34. Lys-34 carries the N6-(pyridoxal phosphate)lysine modification. Arg-129 lines the substrate pocket. Catalysis depends on Tyr-259, which acts as the Proton acceptor; specific for L-alanine. A substrate-binding site is contributed by Met-307.

This sequence belongs to the alanine racemase family. The cofactor is pyridoxal 5'-phosphate.

The enzyme catalyses L-alanine = D-alanine. It functions in the pathway amino-acid biosynthesis; D-alanine biosynthesis; D-alanine from L-alanine: step 1/1. In terms of biological role, catalyzes the interconversion of L-alanine and D-alanine. May also act on other amino acids. The chain is Alanine racemase (alr) from Coxiella burnetii (strain RSA 331 / Henzerling II).